We begin with the raw amino-acid sequence, 422 residues long: Adenylosuccinate synthetase (422 aa).

Residues 12–18 (GDEGKGK) and 40–42 (GHT) contribute to the GTP site. Residue Asp13 is the Proton acceptor of the active site. Mg(2+) contacts are provided by Asp13 and Gly40. Residues 13–16 (DEGK), 38–41 (NAGH), Thr129, Arg143, Asn221, Thr236, and Arg300 contribute to the IMP site. His41 acts as the Proton donor in catalysis. 296 to 302 (VTTGRKR) contributes to the substrate binding site. Residues Arg302, 328–330 (KLD), and 410–412 (GVG) each bind GTP.

This sequence belongs to the adenylosuccinate synthetase family. Homodimer. Mg(2+) serves as cofactor.

The protein localises to the cytoplasm. The enzyme catalyses IMP + L-aspartate + GTP = N(6)-(1,2-dicarboxyethyl)-AMP + GDP + phosphate + 2 H(+). It functions in the pathway purine metabolism; AMP biosynthesis via de novo pathway; AMP from IMP: step 1/2. Plays an important role in the de novo pathway and in the salvage pathway of purine nucleotide biosynthesis. Catalyzes the first committed step in the biosynthesis of AMP from IMP. The polypeptide is Adenylosuccinate synthetase (Pyrenophora tritici-repentis (strain Pt-1C-BFP) (Wheat tan spot fungus)).